We begin with the raw amino-acid sequence, 507 residues long: Maturase K (507 aa).

It belongs to the intron maturase 2 family. MatK subfamily.

The protein resides in the plastid. It is found in the chloroplast. Its function is as follows. Usually encoded in the trnK tRNA gene intron. Probably assists in splicing its own and other chloroplast group II introns. This chain is Maturase K, found in Cupaniopsis anacardioides (Carrotwood).